The chain runs to 314 residues: Ribosome maturation factor RimP (314 aa).

Disordered regions lie at residues 1–20 (MDLDGKVQPPSAQVGQQPLS), 152–176 (PIEASSPIGGSKGALRLTRTDAKPE), and 206–314 (AAKA…PAPK). Polar residues predominate over residues 10–19 (PSAQVGQQPL). The segment covering 215-227 (DGNNEEQDEEQEE) has biased composition (acidic residues). The segment covering 247-256 (PEHNPAQNPI) has biased composition (polar residues). Composition is skewed to basic and acidic residues over residues 270 to 279 (TEFKKSKTGE) and 303 to 314 (SGHDMPRKPAPK).

It belongs to the RimP family.

The protein resides in the cytoplasm. Required for maturation of 30S ribosomal subunits. This Beijerinckia indica subsp. indica (strain ATCC 9039 / DSM 1715 / NCIMB 8712) protein is Ribosome maturation factor RimP.